A 299-amino-acid polypeptide reads, in one-letter code: MGWTDSLPAGSAEQVSALLDRATEFDGKAPVSEQGRHAVAGRGAARHFVELDGDTVVGYAQLQAGSDEHPDMAELVVDPQARRRGIGTRLAAAVFDEGRPGTRVWAHGNVDAAVEFAKSLDLVSVRELLQLRRPLDAPQLPEIVVPEGVTMRTYRGPEDDSEILRVNNAAFSWHPEQGGWTQAEIDERTAEGWFDPAGLFMAFADTDPDTLLGFHWTKVHAPEGDDPELGEVYVVGIDPAAQGRGLGRVLTLAGMHYLRDRGLGTVLLYVEGDNTAALHTYERLGFDRFHVDMAYARAL.

N-acetyltransferase domains are found at residues 1–156 and 149–299; these read MGWT…TYRG and VTMR…ARAL. A 1D-myo-inositol 2-(L-cysteinylamino)-2-deoxy-alpha-D-glucopyranoside-binding site is contributed by glutamate 33. Acetyl-CoA is bound by residues 75-77 and 83-88; these read LVV and RRGIGT. 1D-myo-inositol 2-(L-cysteinylamino)-2-deoxy-alpha-D-glucopyranoside is bound by residues glutamate 176, lysine 218, and glutamate 231. Acetyl-CoA-binding positions include 235–237 and 242–248; these read VGI and QGRGLGR. Tyrosine 269 is a binding site for 1D-myo-inositol 2-(L-cysteinylamino)-2-deoxy-alpha-D-glucopyranoside. 274-279 provides a ligand contact to acetyl-CoA; that stretch reads NTAALH.

This sequence belongs to the acetyltransferase family. MshD subfamily. As to quaternary structure, monomer.

It carries out the reaction 1D-myo-inositol 2-(L-cysteinylamino)-2-deoxy-alpha-D-glucopyranoside + acetyl-CoA = mycothiol + CoA + H(+). Functionally, catalyzes the transfer of acetyl from acetyl-CoA to desacetylmycothiol (Cys-GlcN-Ins) to form mycothiol. This is Mycothiol acetyltransferase from Rhodococcus erythropolis (strain PR4 / NBRC 100887).